Reading from the N-terminus, the 302-residue chain is Bifunctional protein FolD (302 aa).

NADP(+)-binding positions include 165-167 (GRS), Ser190, and Ile231.

It belongs to the tetrahydrofolate dehydrogenase/cyclohydrolase family. In terms of assembly, homodimer.

The catalysed reaction is (6R)-5,10-methylene-5,6,7,8-tetrahydrofolate + NADP(+) = (6R)-5,10-methenyltetrahydrofolate + NADPH. The enzyme catalyses (6R)-5,10-methenyltetrahydrofolate + H2O = (6R)-10-formyltetrahydrofolate + H(+). The protein operates within one-carbon metabolism; tetrahydrofolate interconversion. Catalyzes the oxidation of 5,10-methylenetetrahydrofolate to 5,10-methenyltetrahydrofolate and then the hydrolysis of 5,10-methenyltetrahydrofolate to 10-formyltetrahydrofolate. This Prochlorococcus marinus (strain MIT 9211) protein is Bifunctional protein FolD.